The chain runs to 357 residues: Protein-L-isoaspartate O-methyltransferase domain-containing protein 1 (357 aa).

G2 carries N-myristoyl glycine lipidation. S64 is a catalytic residue. 3 adoMet binding motif regions span residues 85–94 (LNLGSGTGYL), 160–164 (YDRIY), and 181–191 (LKVGGILVMPI). The segment at 240–250 (VRNLQDLARIY) is BC-box. The tract at residues 299 to 333 (PLDSEEDEKMEEDNKEEEEKDHNEAMKPEEPPQNL) is disordered. Residues 301–317 (DSEEDEKMEEDNKEEEE) show a composition bias toward acidic residues. Residues 318–333 (KDHNEAMKPEEPPQNL) show a composition bias toward basic and acidic residues. The tract at residues 341–344 (LPLP) is CUL-box.

It belongs to the methyltransferase superfamily. L-isoaspartyl/D-aspartyl protein methyltransferase family. In terms of assembly, component of the probable ECS(PCMTD1) E3 ubiquitin-protein ligase complex, at least composed of CUL5, ELOB, ELOC, RBX2 and PCMTD1. Interacts (via the BC-box) with ELOB and ELOC; the interaction is direct and stabilizes PCMTD1.

Its subcellular location is the cytoplasm. It is found in the membrane. Its function is as follows. Substrate recognition component of an ECS (Elongin BC-CUL5-SOCS-box protein) E3 ubiquitin ligase complex which mediates the ubiquitination and subsequent proteasomal degradation of target proteins. Specifically binds to the methyltransferase cofactor S-adenosylmethionine (AdoMet) via the N-terminal AdoMet binding motif, but does not display methyltransferase activity. May provide an alternate maintenance pathway for modified proteins by acting as a damage-specific E3 ubiquitin ligase adaptor protein. In Homo sapiens (Human), this protein is Protein-L-isoaspartate O-methyltransferase domain-containing protein 1.